Here is a 135-residue protein sequence, read N- to C-terminus: MSKEFSRAQRVSQQLQKELAVILQREVRDSRIGMVTISDVEVSRDLAYAKVFVTFFCVGEQTPETCLAALKEHEVPVRMMLGKRIRHRLTPEVRFTYDNTLVEGMRMSNLVSDVVNTDKRKMAESGRTESDEGEE.

It belongs to the RbfA family. As to quaternary structure, monomer. Binds 30S ribosomal subunits, but not 50S ribosomal subunits or 70S ribosomes.

The protein resides in the cytoplasm. Functionally, one of several proteins that assist in the late maturation steps of the functional core of the 30S ribosomal subunit. Associates with free 30S ribosomal subunits (but not with 30S subunits that are part of 70S ribosomes or polysomes). Required for efficient processing of 16S rRNA. May interact with the 5'-terminal helix region of 16S rRNA. The chain is Ribosome-binding factor A from Aliivibrio salmonicida (strain LFI1238) (Vibrio salmonicida (strain LFI1238)).